Reading from the N-terminus, the 318-residue chain is 4-hydroxy-3-methylbut-2-enyl diphosphate reductase (318 aa).

Cysteine 12 is a [4Fe-4S] cluster binding site. (2E)-4-hydroxy-3-methylbut-2-enyl diphosphate is bound by residues histidine 41 and histidine 74. Dimethylallyl diphosphate is bound by residues histidine 41 and histidine 74. Isopentenyl diphosphate contacts are provided by histidine 41 and histidine 74. Cysteine 96 is a [4Fe-4S] cluster binding site. Position 124 (histidine 124) interacts with (2E)-4-hydroxy-3-methylbut-2-enyl diphosphate. Histidine 124 serves as a coordination point for dimethylallyl diphosphate. Isopentenyl diphosphate is bound at residue histidine 124. Residue glutamate 126 is the Proton donor of the active site. Threonine 167 contacts (2E)-4-hydroxy-3-methylbut-2-enyl diphosphate. A [4Fe-4S] cluster-binding site is contributed by cysteine 197. Positions 225, 226, 227, and 269 each coordinate (2E)-4-hydroxy-3-methylbut-2-enyl diphosphate. Residues serine 225, serine 226, asparagine 227, and serine 269 each contribute to the dimethylallyl diphosphate site. 4 residues coordinate isopentenyl diphosphate: serine 225, serine 226, asparagine 227, and serine 269.

The protein belongs to the IspH family. The cofactor is [4Fe-4S] cluster.

The enzyme catalyses isopentenyl diphosphate + 2 oxidized [2Fe-2S]-[ferredoxin] + H2O = (2E)-4-hydroxy-3-methylbut-2-enyl diphosphate + 2 reduced [2Fe-2S]-[ferredoxin] + 2 H(+). It carries out the reaction dimethylallyl diphosphate + 2 oxidized [2Fe-2S]-[ferredoxin] + H2O = (2E)-4-hydroxy-3-methylbut-2-enyl diphosphate + 2 reduced [2Fe-2S]-[ferredoxin] + 2 H(+). The protein operates within isoprenoid biosynthesis; dimethylallyl diphosphate biosynthesis; dimethylallyl diphosphate from (2E)-4-hydroxy-3-methylbutenyl diphosphate: step 1/1. It participates in isoprenoid biosynthesis; isopentenyl diphosphate biosynthesis via DXP pathway; isopentenyl diphosphate from 1-deoxy-D-xylulose 5-phosphate: step 6/6. Functionally, catalyzes the conversion of 1-hydroxy-2-methyl-2-(E)-butenyl 4-diphosphate (HMBPP) into a mixture of isopentenyl diphosphate (IPP) and dimethylallyl diphosphate (DMAPP). Acts in the terminal step of the DOXP/MEP pathway for isoprenoid precursor biosynthesis. The protein is 4-hydroxy-3-methylbut-2-enyl diphosphate reductase of Francisella tularensis subsp. holarctica (strain LVS).